A 443-amino-acid chain; its full sequence is tRNA modification GTPase MnmE (443 aa).

(6S)-5-formyl-5,6,7,8-tetrahydrofolate-binding residues include arginine 23, glutamate 82, and lysine 121. In terms of domain architecture, TrmE-type G spans 215-364 (GTSIVLAGHP…LKQFIQKWIQ (150 aa)). K(+) is bound at residue asparagine 225. Residues 225–230 (NAGKSS), 244–250 (TDIPGTT), and 269–272 (DSAG) contribute to the GTP site. Serine 229 is a Mg(2+) binding site. 3 residues coordinate K(+): threonine 244, isoleucine 246, and threonine 249. Threonine 250 is a binding site for Mg(2+). Lysine 443 contacts (6S)-5-formyl-5,6,7,8-tetrahydrofolate.

The protein belongs to the TRAFAC class TrmE-Era-EngA-EngB-Septin-like GTPase superfamily. TrmE GTPase family. Homodimer. Heterotetramer of two MnmE and two MnmG subunits. K(+) is required as a cofactor.

It is found in the cytoplasm. Its function is as follows. Exhibits a very high intrinsic GTPase hydrolysis rate. Involved in the addition of a carboxymethylaminomethyl (cmnm) group at the wobble position (U34) of certain tRNAs, forming tRNA-cmnm(5)s(2)U34. This Chlamydia felis (strain Fe/C-56) (Chlamydophila felis) protein is tRNA modification GTPase MnmE.